We begin with the raw amino-acid sequence, 274 residues long: Putative bidirectional sugar transporter SWEET7d (274 aa).

The Extracellular segment spans residues 1-8; sequence MVPDLIRN. A helical membrane pass occupies residues 9-29; it reads VVGIVGNVISFGLFLSPVPTF. Residues 9–96 form the MtN3/slv 1 domain; sequence VVGIVGNVIS…TIFFLFSDKK (88 aa). At 30 to 45 the chain is on the cytoplasmic side; it reads WRIIKNKDVRDFKADQ. Residues 46–66 traverse the membrane as a helical segment; it reads YLATLLNCMLWVFYGLPIVHP. Topologically, residues 67–68 are extracellular; sequence NS. A helical membrane pass occupies residues 69 to 89; it reads ILVVTINGIGLVIEAVYLTIF. Over 90–100 the chain is Cytoplasmic; that stretch reads FLFSDKKNKKK. Residues 101 to 121 form a helical membrane-spanning segment; it reads MGVVLATEALFMAAVALGVLL. At 122–130 the chain is on the extracellular side; it reads DAHTHQRRS. The chain crosses the membrane as a helical span at residues 131 to 151; the sequence is LIVGILCVIFGTIMYSSPLTI. Residues 132-214 enclose the MtN3/slv 2 domain; it reads IVGILCVIFG…QLILYAIYYR (83 aa). Topologically, residues 152–164 are cytoplasmic; it reads MSQVVKTKSVEYM. A helical transmembrane segment spans residues 165–185; sequence PLLLSVVSFLNGLCWTSYALI. Residues 186–188 lie on the Extracellular side of the membrane; the sequence is RFD. The chain crosses the membrane as a helical span at residues 189 to 209; the sequence is IFITIPNGLGVLFALMQLILY. Topologically, residues 210 to 274 are cytoplasmic; the sequence is AIYYRTTPKK…SISRLSHKLA (65 aa). Residues 218 to 274 form a disordered region; the sequence is KKPSTTGPHPRSRIRTSSYQPSPPSPRAPASSPLSARTTTSMAAMSPSISRLSHKLA. Residues 245–258 are compositionally biased toward low complexity; that stretch reads APASSPLSARTTTS.

The protein belongs to the SWEET sugar transporter family. In terms of assembly, forms homooligomers and/or heterooligomers.

The protein resides in the cell membrane. In terms of biological role, mediates both low-affinity uptake and efflux of sugar across the plasma membrane. The sequence is that of Putative bidirectional sugar transporter SWEET7d (SWEET7D) from Oryza sativa subsp. japonica (Rice).